Here is a 235-residue protein sequence, read N- to C-terminus: REF/SRPP-like protein At2g47780 (235 aa).

Positions Met1–Gln12 are enriched in acidic residues. Residues Met1–Val32 are disordered.

It belongs to the REF/SRPP family.

The polypeptide is REF/SRPP-like protein At2g47780 (Arabidopsis thaliana (Mouse-ear cress)).